Reading from the N-terminus, the 250-residue chain is Sugar fermentation stimulation protein homolog (250 aa).

The protein belongs to the SfsA family.

This Trichodesmium erythraeum (strain IMS101) protein is Sugar fermentation stimulation protein homolog.